Reading from the N-terminus, the 744-residue chain is Glucosamine inositolphosphorylceramide transferase 1 (744 aa).

3 consecutive transmembrane segments (helical) span residues 31-51, 378-398, and 460-480; these read FLVAAAAGAALVGGVYFWLVV, SLFGYMGFLVAVALVTFVGFV, and LFFCVIALIGIVNVCIAVHFL. Substrate contacts are provided by residues asparagine 534, 558 to 563, 579 to 581, arginine 609, and 665 to 669; these read NSLNNR, DDD, and FNCED. Aspartate 581 lines the Mn(2+) pocket. A disulfide bond links cysteine 667 and cysteine 718. Residue aspartate 669 is part of the active site.

The protein belongs to the glycosyltransferase 64 family. The cofactor is Mn(2+). As to expression, highly expressed in almost all tissues.

It localises to the membrane. It functions in the pathway sphingolipid metabolism. Essential protein. Glycosyltransferase that mediates the glycosylation of glycosylinositol phosphorylceramides (GIPCs), the major sphingolipids in the plasma membrane; acts as a HexN(Ac)-specific GIPC sugar transferase. Responsible for the glycosylation of a subgroup of GIPCs found in seeds and pollen that contain GlcNAc and GlcN (GlcN(Ac)). Maybe involved in the maintenance of cell-cell adhesion. The protein is Glucosamine inositolphosphorylceramide transferase 1 of Oryza sativa subsp. japonica (Rice).